A 79-amino-acid polypeptide reads, in one-letter code: Small polypeptide DEVIL 8 (79 aa).

Polar residues predominate over residues 1 to 12 (MSRLRNSAQLQL). The interval 1–37 (MSRLRNSAQLQLSKKESLGDNGGALNTTRSSRQKQGK) is disordered. N-linked (GlcNAc...) asparagine glycosylation occurs at asparagine 26. A required for DVL/RTFL small polypeptide activity region spans residues 39–70 (GFTRKCGRLVKEQRARFYIMRRCVVMLICWTD). A helical transmembrane segment spans residues 55–71 (FYIMRRCVVMLICWTDH). N-linked (GlcNAc...) asparagine glycosylation occurs at asparagine 74.

This sequence belongs to the DVL/RTFL small polypeptides family.

It is found in the cell membrane. Functionally, small polypeptide acting as a regulatory molecule which coordinates cellular responses required for differentiation, growth and development, probably by restricting polar cell proliferation in lateral organs and coordinating socket cell recruitment and differentiation at trichome sites. This chain is Small polypeptide DEVIL 8, found in Arabidopsis thaliana (Mouse-ear cress).